The chain runs to 242 residues: MSEDINNNLNNSDNSNGSNEKIIVGLDEAGRGPVLGPMVIASVKIDEKNLYKLNDLELKDSKQLSKKKREELYIIINEMCDVEKIVIDPETIDKQMEIINLNKIELSAFSKLSNHFIRENDNISIYIDACSSSEQSFSNQFKAKLINKNVEIIAEHKADENYKIVSAASIIAKVTRDRVIEEYKETFGEIGSGYPSDPKTKKFLKNYVYENRTLPKIARKSWATSKNLLKEIEESKIFQWVK.

Positions 21–234 (KIIVGLDEAG…SKNLLKEIEE (214 aa)) constitute an RNase H type-2 domain. Residues Asp-27, Glu-28, and Asp-128 each contribute to the a divalent metal cation site.

It belongs to the RNase HII family. Mn(2+) serves as cofactor. Requires Mg(2+) as cofactor.

Its subcellular location is the cytoplasm. The catalysed reaction is Endonucleolytic cleavage to 5'-phosphomonoester.. Its function is as follows. Endonuclease that specifically degrades the RNA of RNA-DNA hybrids. This Methanococcus maripaludis (strain DSM 14266 / JCM 13030 / NBRC 101832 / S2 / LL) protein is Ribonuclease HII.